We begin with the raw amino-acid sequence, 391 residues long: Phosphopentomutase (391 aa).

Aspartate 14 provides a ligand contact to Mn(2+). The disordered stretch occupies residues 61–88 (IQGVPPDPAPTAFHGRMAERSEGKDTTT). A compositionally biased stretch (basic and acidic residues) spans 76–87 (RMAERSEGKDTT). Mn(2+) is bound by residues aspartate 286, histidine 291, aspartate 327, histidine 328, and histidine 339.

The protein belongs to the phosphopentomutase family. Requires Mn(2+) as cofactor.

It localises to the cytoplasm. It catalyses the reaction 2-deoxy-alpha-D-ribose 1-phosphate = 2-deoxy-D-ribose 5-phosphate. The catalysed reaction is alpha-D-ribose 1-phosphate = D-ribose 5-phosphate. Its pathway is carbohydrate degradation; 2-deoxy-D-ribose 1-phosphate degradation; D-glyceraldehyde 3-phosphate and acetaldehyde from 2-deoxy-alpha-D-ribose 1-phosphate: step 1/2. Functionally, isomerase that catalyzes the conversion of deoxy-ribose 1-phosphate (dRib-1-P) and ribose 1-phosphate (Rib-1-P) to deoxy-ribose 5-phosphate (dRib-5-P) and ribose 5-phosphate (Rib-5-P), respectively. This is Phosphopentomutase from Anaeromyxobacter dehalogenans (strain 2CP-C).